The sequence spans 939 residues: Translation initiation factor IF-2 (939 aa).

The tract at residues 48–355 (KFAPAPKVEN…KPEKKEKEEE (308 aa)) is disordered. Residues 79–93 (QQNQAPKQPQQGTQN) are compositionally biased toward low complexity. A compositionally biased stretch (basic and acidic residues) spans 114–130 (SRDKNSRRDNNNRDGQR). Residues 131–257 (DNNGGYRNND…NNDRNNNGGF (127 aa)) show a composition bias toward low complexity. Over residues 287 to 355 (RNNDRRDSAP…KPEKKEKEEE (69 aa)) the composition is skewed to basic and acidic residues. The tr-type G domain occupies 440 to 609 (PRPPVVCVMG…LLTAEVNELK (170 aa)). The tract at residues 449–456 (GHVDHGKT) is G1. 449-456 (GHVDHGKT) provides a ligand contact to GTP. Residues 474–478 (GITQK) are G2. Residues 495 to 498 (DTPG) form a G3 region. Residues 495-499 (DTPGH) and 549-552 (NKID) contribute to the GTP site. The segment at 549–552 (NKID) is G4. Positions 585-587 (SAH) are G5.

Belongs to the TRAFAC class translation factor GTPase superfamily. Classic translation factor GTPase family. IF-2 subfamily.

It localises to the cytoplasm. In terms of biological role, one of the essential components for the initiation of protein synthesis. Protects formylmethionyl-tRNA from spontaneous hydrolysis and promotes its binding to the 30S ribosomal subunits. Also involved in the hydrolysis of GTP during the formation of the 70S ribosomal complex. The polypeptide is Translation initiation factor IF-2 (Lachnospira eligens (strain ATCC 27750 / DSM 3376 / VPI C15-48 / C15-B4) (Eubacterium eligens)).